We begin with the raw amino-acid sequence, 321 residues long: Chemotaxis protein CheV1 (321 aa).

A CheW-like domain is found at 19–177; that stretch reads ELQLLCFRLG…IEKMLIDVFP (159 aa). One can recognise a Response regulatory domain in the interval 198–319; it reads CVLLADDSPS…IQRVVKQFLE (122 aa). 4-aspartylphosphate is present on D252.

Its function is as follows. Plays an essential role in chemotaxis signal transduction system in order to colonize the host stomach. May act as a phosphate sink to control the flow of phosphate to CheAY. The chain is Chemotaxis protein CheV1 from Helicobacter pylori (strain ATCC 700392 / 26695) (Campylobacter pylori).